Here is a 438-residue protein sequence, read N- to C-terminus: Thymidine phosphorylase (438 aa).

It belongs to the thymidine/pyrimidine-nucleoside phosphorylase family. As to quaternary structure, homodimer.

The enzyme catalyses thymidine + phosphate = 2-deoxy-alpha-D-ribose 1-phosphate + thymine. Its pathway is pyrimidine metabolism; dTMP biosynthesis via salvage pathway; dTMP from thymine: step 1/2. In terms of biological role, the enzymes which catalyze the reversible phosphorolysis of pyrimidine nucleosides are involved in the degradation of these compounds and in their utilization as carbon and energy sources, or in the rescue of pyrimidine bases for nucleotide synthesis. This is Thymidine phosphorylase from Burkholderia cenocepacia (strain ATCC BAA-245 / DSM 16553 / LMG 16656 / NCTC 13227 / J2315 / CF5610) (Burkholderia cepacia (strain J2315)).